The following is a 967-amino-acid chain: Phosphatidylserine decarboxylase proenzyme 3 (967 aa).

A disordered region spans residues 217–255; sequence FIAEPDSSIPPSESSVSISTDTGKETPPSKSKKSSNQPY. Residues 220 to 237 show a composition bias toward low complexity; the sequence is EPDSSIPPSESSVSISTD. Residues 250–373 enclose the C2 domain; sequence SSNQPYVSIG…SSAQVDPETG (124 aa). Ca(2+) is bound by residues aspartate 343, serine 346, and aspartate 349. Positions 532 to 544 are enriched in low complexity; sequence DQQATQTPQSPSS. The segment at 532–566 is disordered; the sequence is DQQATQTPQSPSSNEESGPGTPTQTSDQYEDSEDS. Residues 545 to 558 are compositionally biased toward polar residues; that stretch reads NEESGPGTPTQTSD. Residues aspartate 769, histidine 825, and serine 912 each act as charge relay system; for autoendoproteolytic cleavage activity in the active site. Serine 912 (schiff-base intermediate with substrate; via pyruvic acid; for decarboxylase activity) is an active-site residue. Serine 912 is modified (pyruvic acid (Ser); by autocatalysis). The segment at 947-967 is disordered; it reads IGQKIDPNKPTDAEDHSKSDS.

This sequence belongs to the phosphatidylserine decarboxylase family. PSD-B subfamily. Eukaryotic type II sub-subfamily. As to quaternary structure, heterodimer of a large membrane-associated beta subunit and a small pyruvoyl-containing alpha subunit. The cofactor is pyruvate. Ca(2+) is required as a cofactor. In terms of processing, is synthesized initially as an inactive proenzyme. Formation of the active enzyme involves a self-maturation process in which the active site pyruvoyl group is generated from an internal serine residue via an autocatalytic post-translational modification. Two non-identical subunits are generated from the proenzyme in this reaction, and the pyruvate is formed at the N-terminus of the alpha chain, which is derived from the carboxyl end of the proenzyme. The autoendoproteolytic cleavage occurs by a canonical serine protease mechanism, in which the side chain hydroxyl group of the serine supplies its oxygen atom to form the C-terminus of the beta chain, while the remainder of the serine residue undergoes an oxidative deamination to produce ammonia and the pyruvoyl prosthetic group on the alpha chain. During this reaction, the Ser that is part of the protease active site of the proenzyme becomes the pyruvoyl prosthetic group, which constitutes an essential element of the active site of the mature decarboxylase.

The protein localises to the golgi apparatus membrane. It is found in the endosome membrane. The protein resides in the cytoplasm. The enzyme catalyses a 1,2-diacyl-sn-glycero-3-phospho-L-serine + H(+) = a 1,2-diacyl-sn-glycero-3-phosphoethanolamine + CO2. Its pathway is phospholipid metabolism; phosphatidylethanolamine biosynthesis; phosphatidylethanolamine from CDP-diacylglycerol: step 2/2. Its function is as follows. Catalyzes the formation of phosphatidylethanolamine (PtdEtn) from phosphatidylserine (PtdSer). Plays a central role in phospholipid metabolism and in the interorganelle trafficking of phosphatidylserine. Together with psd1 and psd2, responsible for the majority of phosphatidylethanolamine synthesis. The protein is Phosphatidylserine decarboxylase proenzyme 3 of Schizosaccharomyces pombe (strain 972 / ATCC 24843) (Fission yeast).